A 132-amino-acid chain; its full sequence is U-scoloptoxin(11)-Sa1a (132 aa).

An N-terminal signal peptide occupies residues Met-1–Cys-19.

It belongs to the scoloptoxin-11 family. Contains 5 disulfide bonds. In terms of tissue distribution, expressed by the venom gland.

The protein localises to the secreted. The polypeptide is U-scoloptoxin(11)-Sa1a (Scolopendra alternans (Florida Keys giant centipede)).